Consider the following 204-residue polypeptide: uncharacterized protein (204 aa).

The signal sequence occupies residues 1 to 17 (MKRLVTGLLALSLFLAA). The disordered stretch occupies residues 17–102 (ACGQDSDQQK…NQSSNNQKSS (86 aa)). The N-palmitoyl cysteine moiety is linked to residue Cys18. Cys18 carries the S-diacylglycerol cysteine lipid modification. Residues 23–70 (DQQKDSNKEKDDKAKTEQQDKKTNDSSKDKKDNKDDSKDVNKDNKDNS) show a composition bias toward basic and acidic residues. Residues 71 to 102 (ANDNQQQSNSNATNNDQNQTNNNQSSNNQKSS) show a composition bias toward low complexity.

It localises to the cell membrane. This is an uncharacterized protein from Staphylococcus aureus (strain Mu50 / ATCC 700699).